Here is a 1218-residue protein sequence, read N- to C-terminus: Thrombospondin type 1 domain-containing protein (1218 aa).

4 disordered regions span residues 82–101, 189–240, 298–383, and 445–471; these read SAGF…PCSS, SLEE…SRTR, HTAN…VNGL, and GGKS…SHRG. Basic and acidic residues predominate over residues 201-210; that stretch reads GYEEERERRS. The span at 315–375 shows a compositional bias: low complexity; the sequence is SSRFTSKASS…SSPLSSSPDS (61 aa). The TSP type-1 domain occupies 638–704; that stretch reads SCITGPWSEW…RRKCNLGACP (67 aa). The helical transmembrane segment at 886–906 threads the bilayer; sequence GVSHLWISLCAGAVAAVVFLV. The disordered stretch occupies residues 1129-1153; sequence RRRARRGRREGDSGEGGDCGEARKA.

Component of a complex, at least composed of cysteine repeat modular protein A (CRMPa), cysteine repeat modular protein B (CRMPb), micronemal protein 15 (MIC15) and thrombospondin type 1 domain-containing protein (TSP1).

The protein resides in the membrane. Required for rhoptry secretion. Plays a role in host cell invasion. The protein is Thrombospondin type 1 domain-containing protein of Toxoplasma gondii.